The primary structure comprises 202 residues: Cilia- and flagella-associated protein 418 (202 aa).

The tract at residues 71 to 90 is disordered; the sequence is DVDTPTSTHEPSPAKASSSA. Residues 74 to 90 are compositionally biased toward polar residues; the sequence is TPTSTHEPSPAKASSSA.

Ubiquitously expressed during early development and in adult tissues including the eye, brain, heart and kidney.

The protein localises to the cytoplasm. The protein resides in the photoreceptor inner segment. Functionally, may be involved in photoreceptor outer segment disk morphogenesis. The chain is Cilia- and flagella-associated protein 418 (cfap418) from Danio rerio (Zebrafish).